A 326-amino-acid chain; its full sequence is Nine-heme cytochrome c (326 aa).

The signal sequence occupies residues 1–30 (MRNGTSLLLLAAIALAGAACLTAMGGTAKA). Heme-binding residues include H67, H70, C77, C80, H81, H82, C89, C92, H93, H111, C127, C130, H131, C141, C144, H145, C157, C160, H161, H227, H230, H248, C255, C258, H259, H260, C271, C274, H275, H294, C297, C300, H301, C314, C317, and H318.

As to quaternary structure, monomer. Binds 9 heme groups per subunit.

It is found in the periplasm. May form part of a transmembrane redox complex through which electrons are transferred to the cytoplasm for reduction of sulfate. The polypeptide is Nine-heme cytochrome c (Desulfovibrio desulfuricans (strain ATCC 27774 / DSM 6949 / MB)).